Here is a 471-residue protein sequence, read N- to C-terminus: Ribulose bisphosphate carboxylase large chain 2 (471 aa).

Positions 116 and 166 each coordinate substrate. The active-site Proton acceptor is the K168. A substrate-binding site is contributed by K170. Mg(2+) is bound by residues K194, D196, and E197. K194 is modified (N6-carboxylysine). The Proton acceptor role is filled by H287. Substrate is bound by residues R288, H320, and S372.

The protein belongs to the RuBisCO large chain family. Type I subfamily. Heterohexadecamer of 8 large chains and 8 small chains. Forms a CsoS2-CsoS1-RuBisCO complex. Mg(2+) serves as cofactor.

Its subcellular location is the carboxysome. The catalysed reaction is 2 (2R)-3-phosphoglycerate + 2 H(+) = D-ribulose 1,5-bisphosphate + CO2 + H2O. The enzyme catalyses D-ribulose 1,5-bisphosphate + O2 = 2-phosphoglycolate + (2R)-3-phosphoglycerate + 2 H(+). In terms of biological role, ruBisCO catalyzes two reactions: the carboxylation of D-ribulose 1,5-bisphosphate, the primary event in carbon dioxide fixation, as well as the oxidative fragmentation of the pentose substrate. Both reactions occur simultaneously and in competition at the same active site. Replacing the endogenous type I ccbLS genes in H.neapolitanus with this carboxysomally targeted enzyme reconstitutes RuBisCO with about 25% of normal activity; the active enzyme is targeted to carboxysomes. The polypeptide is Ribulose bisphosphate carboxylase large chain 2 (Hydrogenovibrio crunogenus (strain DSM 25203 / XCL-2) (Thiomicrospira crunogena)).